The sequence spans 747 residues: Protein O-mannosyl-transferase 1 (747 aa).

The next 7 helical transmembrane spans lie at 30-50 (PLVV…LGLL), 90-110 (FGHM…NFLW), 121-141 (VPVW…VPMA), 176-196 (LLES…LKFF), 205-225 (SVHW…AVGI), 228-248 (MGIF…WHLI), and 267-287 (VALL…HLML). 3 consecutive MIR domains span residues 318–381 (PLEV…VKDP), 392–449 (PRPV…LDIV), and 453–513 (SNQD…VEEH). Residues Asn-435, Asn-471, and Asn-539 are each glycosylated (N-linked (GlcNAc...) asparagine). Transmembrane regions (helical) follow at residues 597–617 (IVIW…FFWY), 636–656 (WVLA…PFFL), and 660–680 (MLFL…LPIV).

Belongs to the glycosyltransferase 39 family.

It is found in the endoplasmic reticulum membrane. The catalysed reaction is a di-trans,poly-cis-dolichyl beta-D-mannosyl phosphate + L-seryl-[protein] = 3-O-(alpha-D-mannosyl)-L-seryl-[protein] + a di-trans,poly-cis-dolichyl phosphate + H(+). It carries out the reaction a di-trans,poly-cis-dolichyl beta-D-mannosyl phosphate + L-threonyl-[protein] = 3-O-(alpha-D-mannosyl)-L-threonyl-[protein] + a di-trans,poly-cis-dolichyl phosphate + H(+). The protein operates within protein modification; protein glycosylation. Its function is as follows. Transfers mannosyl residues to the hydroxyl group of serine or threonine residues. Coexpression of both POMT1 and POMT2 is necessary for enzyme activity, expression of either POMT1 or POMT2 alone is insufficient. Essentially dedicated to O-mannosylation of alpha-DAG1 and few other proteins but not of cadherins and protocaherins. This Rattus norvegicus (Rat) protein is Protein O-mannosyl-transferase 1 (Pomt1).